The following is a 455-amino-acid chain: MSGLRNTSEAVAVLASLGLGMVLLMFVATTPPAVEATQSGIYIDNGKDQTIMHRVLSEDDKLDVSYEILEFLGIAERPTHLSSHQLSLRKSAPKFLLDVYHRITAEEGLSDQDEDDDYERGHRSRRSADLEEDEGEQQKNFITDLDKRAIDESDIIMTFLNKRHHNVDELRHEHGRRLWFDVSNVPNDNYLVMAELRIYQNANEGKWLTANREFTITVYAIGTGTLGQHTMEPLSSVNTTGDYVGWLELNVTEGLHEWLVKSKDNHGIYIGAHAVNRPDREVKLDDIGLIHRKVDDEFQPFMIGFFRGPELIKATAHSSHHRSKRSASHPRKRKKSVSPNNVPLLEPMESTRSCQMQTLYIDFKDLGWHDWIIAPEGYGAFYCSGECNFPLNAHMNATNHAIVQTLVHLLEPKKVPKPCCAPTRLGALPVLYHLNDENVNLKKYRNMIVKSCGCH.

The signal sequence occupies residues 1–36; it reads MSGLRNTSEAVAVLASLGLGMVLLMFVATTPPAVEA. Positions 37 to 335 are excised as a propeptide; sequence TQSGIYIDNG…SASHPRKRKK (299 aa). Residues 108-118 show a composition bias toward acidic residues; it reads GLSDQDEDDDY. A disordered region spans residues 108–138; the sequence is GLSDQDEDDDYERGHRSRRSADLEEDEGEQQ. 2 N-linked (GlcNAc...) asparagine glycosylation sites follow: Asn-238 and Asn-250. Residues 316–345 form a disordered region; that stretch reads AHSSHHRSKRSASHPRKRKKSVSPNNVPLL. Basic residues predominate over residues 318 to 336; the sequence is SSHHRSKRSASHPRKRKKS. 3 disulfides stabilise this stretch: Cys-354/Cys-420, Cys-383/Cys-452, and Cys-387/Cys-454. Residue Asn-396 is glycosylated (N-linked (GlcNAc...) asparagine).

This sequence belongs to the TGF-beta family. In terms of assembly, homodimer; disulfide-linked. Interacts with nord and dpp. Expressed in cells of the developing foregut and hindgut during germ band retraction and later embryonic stages. Expressed in the wing disk, mainly in the posterior compartment in the pteropleural and medial regions extending into the progenitors of the scutellum. High levels are found within the posterior and anterior compartments of the wing pouch and low levels in the hinge region. In the eye/antennal disk, expression is highest anterior to the morphogenetic furrow and in the medial regions with lower levels of expression posterior to the morphogenetic furrow. Expressed throughout the posterior compartment of the leg imaginal disks and within the ventral anterior compartment.

It localises to the secreted. Its function is as follows. Required for the growth of imaginal tissues and for patterning of the adult wing. The polypeptide is Protein 60A (gbb) (Drosophila melanogaster (Fruit fly)).